Reading from the N-terminus, the 134-residue chain is Cytochrome c-550 (134 aa).

Gln-1 is subject to Pyrrolidone carboxylic acid. Positions 15, 18, 19, and 100 each coordinate heme c.

In terms of processing, binds 1 heme c group covalently per subunit.

Its function is as follows. Electron donor for nitrous-oxide reductase. The chain is Cytochrome c-550 from Paracoccus pantotrophus (Thiosphaera pantotropha).